The following is a 106-amino-acid chain: Small ribosomal subunit protein uS10 (106 aa).

Belongs to the universal ribosomal protein uS10 family. As to quaternary structure, part of the 30S ribosomal subunit.

Involved in the binding of tRNA to the ribosomes. This is Small ribosomal subunit protein uS10 from Hyphomonas neptunium (strain ATCC 15444).